Reading from the N-terminus, the 541-residue chain is 2-hydroxyacylsphingosine 1-beta-galactosyltransferase (541 aa).

The N-terminal stretch at 1-20 (MKSYTPYFMLLWSAVGIARA) is a signal peptide. N-linked (GlcNAc...) asparagine glycans are attached at residues asparagine 78, asparagine 333, and asparagine 442. Residues 472–492 (YFLLDIAFVLLLGAVALYFIV) form a helical membrane-spanning segment.

It belongs to the UDP-glycosyltransferase family. As to expression, brain, restricted to the oligodendrocyte-containing cell layers of cerebrum and cerebellum.

It localises to the membrane. Its subcellular location is the endoplasmic reticulum. The catalysed reaction is an N-acylsphing-4-enine + UDP-alpha-D-galactose = a beta-D-galactosyl-(1&lt;-&gt;1')-N-acylsphing-4-enine + UDP + H(+). It carries out the reaction N-(2-hydroxy-hexanoyl)-sphing-4-enine + UDP-alpha-D-galactose = N-(2-hydroxy-hexanoyl)-beta-D-galactosyl-sphing-4-enine + UDP + H(+). The enzyme catalyses N-(2-hydroxy-hexanoyl)-sphinganine + UDP-alpha-D-galactose = N-(2-hydroxyhexanoyl)-beta-D-galactosylsphinganine + UDP + H(+). It catalyses the reaction an N-acyl-sphingoid base + UDP-alpha-D-galactose = a D-galactosylceramide + UDP + H(+). It participates in sphingolipid metabolism; galactosylceramide biosynthesis. Its function is as follows. Catalyzes the transfer of galactose to ceramide, a key enzymatic step in the biosynthesis of galactocerebrosides, which are abundant sphingolipids of the myelin membrane of the central nervous system and peripheral nervous system. Galactosylates both hydroxy- and non-hydroxy fatty acid-containing ceramides and diglycerides. This is 2-hydroxyacylsphingosine 1-beta-galactosyltransferase from Rattus norvegicus (Rat).